Reading from the N-terminus, the 141-residue chain is Hemoglobin subunit alpha (141 aa).

The Globin domain occupies 1-141 (VLSSDDKCNV…VSSVLTSKYR (141 aa)). O2 is bound at residue H58. H87 is a heme b binding site.

Belongs to the globin family. Heterotetramer of two alpha chains and two beta chains. In terms of tissue distribution, red blood cells.

Functionally, involved in oxygen transport from the lung to the various peripheral tissues. The protein is Hemoglobin subunit alpha (HBA) of Crocodylus niloticus (Nile crocodile).